The chain runs to 804 residues: Zinc finger protein YGR067C (804 aa).

2 consecutive C2H2-type zinc fingers follow at residues 8–30 (YICS…ERSH) and 36–59 (FQCQ…RTVH). The segment covering 782–796 (QEFSASSTDNKQSKN) has biased composition (polar residues). Residues 782 to 804 (QEFSASSTDNKQSKNIEIFSQIK) are disordered.

Its subcellular location is the nucleus. In Saccharomyces cerevisiae (strain ATCC 204508 / S288c) (Baker's yeast), this protein is Zinc finger protein YGR067C.